The chain runs to 465 residues: Muscarinic acetylcholine receptor M2 (465 aa).

At 1–21 (MNNSTNSSNNVALTSPYKTFE) the chain is on the extracellular side. Asn-2, Asn-3, and Asn-6 each carry an N-linked (GlcNAc...) asparagine glycan. The chain crosses the membrane as a helical span at residues 22–44 (VVFIVLVAGSLSLVTIIGNILVM). At 45–58 (VSIKVNRHLQTVNN) the chain is on the cytoplasmic side. Residues 59-79 (YFLFSLACADLIIGVFSMNLY) traverse the membrane as a helical segment. The Extracellular segment spans residues 80–96 (TLYTVIGYWPLGPVVCD). Cys-95 and Cys-175 form a disulfide bridge. Residues 97 to 118 (LWLALDYVVSNASVMNLLIISF) form a helical membrane-spanning segment. The short motif at 119 to 121 (DRY) is the Important for signaling element. Topologically, residues 119-138 (DRYFCVTKPLTYPVKRTTKM) are cytoplasmic. A helical transmembrane segment spans residues 139-161 (AGMMIAAAWVLSFILWAPAILFW). Residues 162–183 (QFIVGVRTVEDGECYIQFFSNA) are Extracellular-facing. Residues 184–208 (AVTFGTAIAAFYLPVIIMTVLYWHI) form a helical membrane-spanning segment. Residues 209 to 386 (SRASKSRIKK…PPSREKKVTR (178 aa)) are Cytoplasmic-facing. A disordered region spans residues 217–319 (KKDKKEPVAN…SVGHSKDENS (103 aa)). Ser-231 bears the Phosphoserine mark. Over residues 253–269 (GLEHNKIQNGKTPRDAV) the composition is skewed to basic and acidic residues. Polar residues-rich tracts occupy residues 283–292 (NDSTSVSAVA) and 303–312 (DENTVSTSVG). The chain crosses the membrane as a helical span at residues 387 to 409 (TILAILLAFIITWAPYNVMVLIN). The Extracellular segment spans residues 410–417 (TFCAPCIP). An intrachain disulfide couples Cys-412 to Cys-415. The chain crosses the membrane as a helical span at residues 418-441 (NTVWTIGYWLCYINSTINPACYAL). The short motif at 435-439 (NPACY) is the Important for signaling element. Residues 442-465 (CNATFKKTFKHLLMCHYKNIGATR) lie on the Cytoplasmic side of the membrane. Residues Thr-445, Thr-449, and Thr-464 each carry the phosphothreonine modification.

The protein belongs to the G-protein coupled receptor 1 family. Muscarinic acetylcholine receptor subfamily. CHRM2 sub-subfamily. In terms of assembly, interacts with ARRB1 and ARRB2. Interacts with RACK1; the interaction regulates CHRM2 internalization. Post-translationally, phosphorylated in response to agonist treatment.

It is found in the cell membrane. It localises to the postsynaptic cell membrane. The muscarinic acetylcholine receptor mediates various cellular responses, including inhibition of adenylate cyclase, breakdown of phosphoinositides and modulation of potassium channels through the action of G proteins. Primary transducing effect is adenylate cyclase inhibition. Signaling promotes phospholipase C activity, leading to the release of inositol trisphosphate (IP3); this then triggers calcium ion release into the cytosol. The polypeptide is Muscarinic acetylcholine receptor M2 (CHRM2) (Bos taurus (Bovine)).